Consider the following 744-residue polypeptide: Tripartite motif-containing protein 2 (744 aa).

Ser10 is modified (phosphoserine). An RING-type zinc finger spans residues 23–64 (CSICLERYKNPKVLPCLHTFCERCLQNYIPAHSLTLSCPVCR). A B box-type zinc finger spans residues 113–154 (GKPLSCPNHDGNVMDFYCQSCETAMCRECTEGEHAEHPTVPL). Zn(2+)-binding residues include Cys118, His121, Cys141, and His146. The stretch at 320 to 421 (TTNAVASETV…IRGSPFKLKV (102 aa)) is one Filamin repeat. Thr371 carries the phosphothreonine modification. Phosphoserine occurs at positions 375, 424, and 428. Residues 432–462 (EGVKRRVKSPGSGHVKQKAVKRPASMYSTGK) are disordered. 6 NHL repeats span residues 473-516 (IFRV…FSND), 520-563 (KSRF…FSSD), 564-605 (GKFK…FQPN), 609-652 (VTRF…FNQE), 656-699 (MLKF…FDGS), and 700-743 (GSFL…YRYL).

It belongs to the TRIM/RBCC family. As to quaternary structure, forms homooligomers. Interacts with TRIM3; this interaction reduces TRIM2 activity. Interacts with myosin V; myosin V may not be a substrate for ubiquitination. Interacts with NEFL. Interacts with phosphorylated BCL2L11. Interacts with SIRPA. Post-translationally, RING-type zinc finger-dependent and UBE2D1-dependent autoubiquitination.

The protein localises to the cytoplasm. It catalyses the reaction S-ubiquitinyl-[E2 ubiquitin-conjugating enzyme]-L-cysteine + [acceptor protein]-L-lysine = [E2 ubiquitin-conjugating enzyme]-L-cysteine + N(6)-ubiquitinyl-[acceptor protein]-L-lysine.. It participates in protein modification; protein ubiquitination. Its function is as follows. UBE2D1-dependent E3 ubiquitin-protein ligase that mediates the ubiquitination of NEFL and of phosphorylated BCL2L11. Plays a neuroprotective function. May play a role in neuronal rapid ischemic tolerance. Plays a role in antiviral immunity and limits New World arenavirus infection independently of its ubiquitin ligase activity. The sequence is that of Tripartite motif-containing protein 2 (TRIM2) from Bos taurus (Bovine).